Consider the following 210-residue polypeptide: GEM-like protein 7 (210 aa).

The 79-residue stretch at 88-166 folds into the GRAM domain; sequence KIYKRLFKVC…CKINGVNQSQ (79 aa).

It belongs to the GEM family.

The protein is GEM-like protein 7 of Arabidopsis thaliana (Mouse-ear cress).